A 320-amino-acid chain; its full sequence is Malate dehydrogenase (320 aa).

NAD(+) contacts are provided by residues 10–15 (GSGMIG) and D34. R83 and R89 together coordinate substrate. NAD(+) contacts are provided by residues N96 and 119–121 (ITN). Residues N121 and R152 each contribute to the substrate site. H176 acts as the Proton acceptor in catalysis.

The protein belongs to the LDH/MDH superfamily. MDH type 3 family.

The catalysed reaction is (S)-malate + NAD(+) = oxaloacetate + NADH + H(+). Catalyzes the reversible oxidation of malate to oxaloacetate. This is Malate dehydrogenase from Brucella anthropi (strain ATCC 49188 / DSM 6882 / CCUG 24695 / JCM 21032 / LMG 3331 / NBRC 15819 / NCTC 12168 / Alc 37) (Ochrobactrum anthropi).